A 270-amino-acid polypeptide reads, in one-letter code: Release factor glutamine methyltransferase (270 aa).

S-adenosyl-L-methionine-binding positions include 112–116 (GTGSG), Asp-135, Trp-162, and Asn-178. 178–181 (NPPY) serves as a coordination point for substrate.

It belongs to the protein N5-glutamine methyltransferase family. PrmC subfamily.

The enzyme catalyses L-glutaminyl-[peptide chain release factor] + S-adenosyl-L-methionine = N(5)-methyl-L-glutaminyl-[peptide chain release factor] + S-adenosyl-L-homocysteine + H(+). Methylates the class 1 translation termination release factors RF1/PrfA and RF2/PrfB on the glutamine residue of the universally conserved GGQ motif. This Bordetella pertussis (strain Tohama I / ATCC BAA-589 / NCTC 13251) protein is Release factor glutamine methyltransferase.